A 413-amino-acid chain; its full sequence is Argininosuccinate synthase (413 aa).

Position 22–30 (22–30) interacts with ATP; that stretch reads AYSGGLDTS. Positions 100 and 105 each coordinate L-citrulline. Residue Gly130 coordinates ATP. Residues Thr132, Asn136, and Asp137 each coordinate L-aspartate. Asn136 contacts L-citrulline. Residues Arg140, Ser189, Ser198, Glu274, and Tyr286 each contribute to the L-citrulline site.

This sequence belongs to the argininosuccinate synthase family. Type 1 subfamily. In terms of assembly, homotetramer.

The protein localises to the cytoplasm. It catalyses the reaction L-citrulline + L-aspartate + ATP = 2-(N(omega)-L-arginino)succinate + AMP + diphosphate + H(+). It participates in amino-acid biosynthesis; L-arginine biosynthesis; L-arginine from L-ornithine and carbamoyl phosphate: step 2/3. This chain is Argininosuccinate synthase, found in Endomicrobium trichonymphae.